Consider the following 306-residue polypeptide: MTEKVAVLLGGTSAEREVSLLSGQAVLAGLKEAGINAHAVDTRDVSVTTLKEEGFTKIFIALHGRGGEDGTLQGVLEFLGLPYTGSGVMASALTMDKLRTKQVWQAVGLPVSPYVALDRRQYSEMAANALLATFTHLGLPLIVKPSREGSSVGMSKVNTLSELPAALEEAFRHDDDILVEKWLSGPEYTVAILGDEVLPSIRIQPAGTFYDYEAKYLSDDTQYFCPSGLSDEKEQELAGLAMAAYRAVGCSGWGRVDFMLDSDGAFYLLEVNTSPGMTSHSLVPMAAHQRGLTFSQLVVKILELAG.

An ATP-grasp domain is found at 101–303 (KQVWQAVGLP…FSQLVVKILE (203 aa)). 134–189 (FTHLGLPLIVKPSREGSSVGMSKVNTLSELPAALEEAFRHDDDILVEKWLSGPEYT) is an ATP binding site. Positions 257, 270, and 272 each coordinate Mg(2+).

It belongs to the D-alanine--D-alanine ligase family. Requires Mg(2+) as cofactor. It depends on Mn(2+) as a cofactor.

It localises to the cytoplasm. The catalysed reaction is 2 D-alanine + ATP = D-alanyl-D-alanine + ADP + phosphate + H(+). Its pathway is cell wall biogenesis; peptidoglycan biosynthesis. Its function is as follows. Cell wall formation. This is D-alanine--D-alanine ligase from Pectobacterium carotovorum subsp. carotovorum (strain PC1).